A 545-amino-acid chain; its full sequence is T-complex protein 1 subunit gamma (545 aa).

Residue methionine 1 is modified to N-acetylmethionine. Residues 1–24 (MMGHRPVLVLSQNTKRESGRKVQS) are disordered. Position 11 is a phosphoserine (serine 11). Lysine 15 is covalently cross-linked (Glycyl lysine isopeptide (Lys-Gly) (interchain with G-Cter in SUMO2)). Residue glycine 42 coordinates ADP. Glycine 42 contributes to the ATP binding site. Aspartate 93 is a binding site for Mg(2+). Glycine 94, threonine 95, threonine 96, serine 97, threonine 162, and lysine 163 together coordinate ADP. Residues glycine 94, threonine 95, and threonine 96 each coordinate ATP. Residue serine 170 is modified to Phosphoserine. Lysine 222 is modified (N6-acetyllysine). A phosphoserine mark is found at serine 243 and serine 244. The residue at position 247 (tyrosine 247) is a Phosphotyrosine. Glycyl lysine isopeptide (Lys-Gly) (interchain with G-Cter in SUMO2) cross-links involve residues lysine 248 and lysine 249. Serine 252 is modified (phosphoserine). Cysteine 366 and cysteine 372 form a disulfide bridge. Residue lysine 381 forms a Glycyl lysine isopeptide (Lys-Gly) (interchain with G-Cter in SUMO2) linkage. Glycine 411 is an ADP binding site. Glycine 411 serves as a coordination point for ATP. A phosphothreonine mark is found at threonine 430 and threonine 459. ADP-binding residues include glycine 482, glutamate 483, glutamate 497, and lysine 502. Glycine 482 is a binding site for ATP. Glutamate 497 contributes to the ATP binding site. The tract at residues 526 to 545 (HKKKGDDQSRQGGAPDAGQE) is disordered.

The protein belongs to the TCP-1 chaperonin family. Component of the chaperonin-containing T-complex (TRiC), a hexadecamer composed of two identical back-to-back stacked rings enclosing a protein folding chamber. Each ring is made up of eight different subunits: TCP1/CCT1, CCT2, CCT3, CCT4, CCT5, CCT6A/CCT6, CCT7, CCT8. Interacts with PACRG. Interacts with DNAAF4. Interacts with DLEC1.

The protein localises to the cytoplasm. The catalysed reaction is ATP + H2O = ADP + phosphate + H(+). Its function is as follows. Component of the chaperonin-containing T-complex (TRiC), a molecular chaperone complex that assists the folding of actin, tubulin and other proteins upon ATP hydrolysis. The TRiC complex mediates the folding of WRAP53/TCAB1, thereby regulating telomere maintenance. As part of the TRiC complex may play a role in the assembly of BBSome, a complex involved in ciliogenesis regulating transports vesicles to the cilia. This is T-complex protein 1 subunit gamma (CCT3) from Pongo abelii (Sumatran orangutan).